Here is a 311-residue protein sequence, read N- to C-terminus: Ribonuclease Z (311 aa).

Zn(2+) is bound by residues His61, His63, Asp65, His66, His139, Asp210, and His268. Residue Asp65 is the Proton acceptor of the active site.

It belongs to the RNase Z family. Homodimer. It depends on Zn(2+) as a cofactor.

It carries out the reaction Endonucleolytic cleavage of RNA, removing extra 3' nucleotides from tRNA precursor, generating 3' termini of tRNAs. A 3'-hydroxy group is left at the tRNA terminus and a 5'-phosphoryl group is left at the trailer molecule.. Functionally, zinc phosphodiesterase, which displays some tRNA 3'-processing endonuclease activity. Probably involved in tRNA maturation, by removing a 3'-trailer from precursor tRNA. The chain is Ribonuclease Z from Haloarcula marismortui (strain ATCC 43049 / DSM 3752 / JCM 8966 / VKM B-1809) (Halobacterium marismortui).